A 324-amino-acid chain; its full sequence is MATH domain and coiled-coil domain-containing protein At3g44790 (324 aa).

Residues 3-125 (YEKFTWVIKN…NNEVKIVVEV (123 aa)) enclose the MATH domain. Residues 241–309 (FKVDWLERKL…ALLEKEKAKS (69 aa)) adopt a coiled-coil conformation.

This chain is MATH domain and coiled-coil domain-containing protein At3g44790, found in Arabidopsis thaliana (Mouse-ear cress).